A 316-amino-acid polypeptide reads, in one-letter code: Arginine transport system permease protein ArgU (316 aa).

Polar residues predominate over residues 1 to 14 (MSDLNQGPGASTAQ). Positions 1–20 (MSDLNQGPGASTAQPKPIEA) are disordered. 6 consecutive transmembrane segments (helical) span residues 29-49 (WVAAAIIVALLAWFIISALNN), 74-94 (IALTLLSMILGVVLGAILAVM), 108-128 (LYLWIFRGTPIYVQLVFWGLL), 151-171 (MFLLAVIGLGLNEAAYMAEIV), 217-237 (LISMLKTTSLVVAIPYSLELY), and 251-271 (VPMLLVAASWYLVITSILMVG). The 205-residue stretch at 70 to 274 (ALHTIALTLL…TSILMVGQYY (205 aa)) folds into the ABC transmembrane type-1 domain.

It belongs to the binding-protein-dependent transport system permease family. In terms of assembly, the complex is probably composed of two ATP-binding proteins (ArgV), two transmembrane proteins (ArgU) and a solute-binding protein (ArgT).

Its subcellular location is the cell membrane. In terms of biological role, part of the ABC transporter complex ArgTUV involved in L-arginine import. May also transport L-citrulline. Probably responsible for the translocation of the substrate across the membrane. This Corynebacterium glutamicum (strain ATCC 13032 / DSM 20300 / JCM 1318 / BCRC 11384 / CCUG 27702 / LMG 3730 / NBRC 12168 / NCIMB 10025 / NRRL B-2784 / 534) protein is Arginine transport system permease protein ArgU.